The sequence spans 89 residues: Small ribosomal subunit protein bS20 (89 aa).

Basic and acidic residues predominate over residues 1–11 (MANHKSAEKRN). The segment at 1–30 (MANHKSAEKRNRQNQVARLRNKSTRTAMKN) is disordered.

This sequence belongs to the bacterial ribosomal protein bS20 family.

In terms of biological role, binds directly to 16S ribosomal RNA. The polypeptide is Small ribosomal subunit protein bS20 (Desulfotalea psychrophila (strain LSv54 / DSM 12343)).